The sequence spans 464 residues: Glucose-6-phosphate isomerase (464 aa).

Glu290 functions as the Proton donor in the catalytic mechanism. Catalysis depends on residues His319 and Lys433.

This sequence belongs to the GPI family.

It is found in the cytoplasm. It catalyses the reaction alpha-D-glucose 6-phosphate = beta-D-fructose 6-phosphate. It participates in carbohydrate biosynthesis; gluconeogenesis. Its pathway is carbohydrate degradation; glycolysis; D-glyceraldehyde 3-phosphate and glycerone phosphate from D-glucose: step 2/4. In terms of biological role, catalyzes the reversible isomerization of glucose-6-phosphate to fructose-6-phosphate. The polypeptide is Glucose-6-phosphate isomerase (Carboxydothermus hydrogenoformans (strain ATCC BAA-161 / DSM 6008 / Z-2901)).